We begin with the raw amino-acid sequence, 336 residues long: Ketol-acid reductoisomerase (NADP(+)) 1 (336 aa).

The KARI N-terminal Rossmann domain maps to 2–181; the sequence is AKVYYEKDVT…GATRAGVLET (180 aa). NADP(+) contacts are provided by residues 25–28, Arg-48, Ser-52, and 82–85; these read YGSQ and DELQ. Residue His-107 is part of the active site. Gly-133 provides a ligand contact to NADP(+). The 146-residue stretch at 182–327 folds into the KARI C-terminal knotted domain; that stretch reads TFKEETETDL…RKLREMMPFV (146 aa). The Mg(2+) site is built by Asp-190, Glu-194, Glu-226, and Glu-230. Ser-251 lines the substrate pocket.

Belongs to the ketol-acid reductoisomerase family. Mg(2+) is required as a cofactor.

It carries out the reaction (2R)-2,3-dihydroxy-3-methylbutanoate + NADP(+) = (2S)-2-acetolactate + NADPH + H(+). It catalyses the reaction (2R,3R)-2,3-dihydroxy-3-methylpentanoate + NADP(+) = (S)-2-ethyl-2-hydroxy-3-oxobutanoate + NADPH + H(+). It functions in the pathway amino-acid biosynthesis; L-isoleucine biosynthesis; L-isoleucine from 2-oxobutanoate: step 2/4. Its pathway is amino-acid biosynthesis; L-valine biosynthesis; L-valine from pyruvate: step 2/4. In terms of biological role, involved in the biosynthesis of branched-chain amino acids (BCAA). Catalyzes an alkyl-migration followed by a ketol-acid reduction of (S)-2-acetolactate (S2AL) to yield (R)-2,3-dihydroxy-isovalerate. In the isomerase reaction, S2AL is rearranged via a Mg-dependent methyl migration to produce 3-hydroxy-3-methyl-2-ketobutyrate (HMKB). In the reductase reaction, this 2-ketoacid undergoes a metal-dependent reduction by NADPH to yield (R)-2,3-dihydroxy-isovalerate. The polypeptide is Ketol-acid reductoisomerase (NADP(+)) 1 (Bacillus cereus (strain ATCC 14579 / DSM 31 / CCUG 7414 / JCM 2152 / NBRC 15305 / NCIMB 9373 / NCTC 2599 / NRRL B-3711)).